Reading from the N-terminus, the 73-residue chain is Toxin Td5 (73 aa).

An N-terminal signal peptide occupies residues Ile-1–Cys-7. One can recognise an LCN-type CS-alpha/beta domain in the interval Lys-8 to Arg-70. Cystine bridges form between Cys-18–Cys-69, Cys-22–Cys-44, Cys-30–Cys-50, and Cys-34–Cys-52. Arg-70 is modified (arginine amide).

It belongs to the long (4 C-C) scorpion toxin superfamily. Sodium channel inhibitor family. Beta subfamily. As to expression, expressed by the venom gland.

The protein resides in the secreted. Functionally, beta toxins bind voltage-independently at site-4 of sodium channels (Nav) and shift the voltage of activation toward more negative potentials thereby affecting sodium channel activation and promoting spontaneous and repetitive firing. In Tityus discrepans (Venezuelan scorpion), this protein is Toxin Td5.